We begin with the raw amino-acid sequence, 662 residues long: UvrABC system protein B (662 aa).

Positions D31–R188 constitute a Helicase ATP-binding domain. G44–T51 provides a ligand contact to ATP. The Beta-hairpin motif lies at Y97–V120. A Helicase C-terminal domain is found at Q435–I601. The UVR domain maps to K626–M661.

Belongs to the UvrB family. In terms of assembly, forms a heterotetramer with UvrA during the search for lesions. Interacts with UvrC in an incision complex.

The protein resides in the cytoplasm. The UvrABC repair system catalyzes the recognition and processing of DNA lesions. A damage recognition complex composed of 2 UvrA and 2 UvrB subunits scans DNA for abnormalities. Upon binding of the UvrA(2)B(2) complex to a putative damaged site, the DNA wraps around one UvrB monomer. DNA wrap is dependent on ATP binding by UvrB and probably causes local melting of the DNA helix, facilitating insertion of UvrB beta-hairpin between the DNA strands. Then UvrB probes one DNA strand for the presence of a lesion. If a lesion is found the UvrA subunits dissociate and the UvrB-DNA preincision complex is formed. This complex is subsequently bound by UvrC and the second UvrB is released. If no lesion is found, the DNA wraps around the other UvrB subunit that will check the other stand for damage. This Streptococcus gordonii (strain Challis / ATCC 35105 / BCRC 15272 / CH1 / DL1 / V288) protein is UvrABC system protein B.